Reading from the N-terminus, the 214-residue chain is Thiamine-phosphate synthase (214 aa).

Residues 37-41 (QYREK) and Asn-73 each bind 4-amino-2-methyl-5-(diphosphooxymethyl)pyrimidine. Mg(2+) contacts are provided by Asp-74 and Asp-93. 4-amino-2-methyl-5-(diphosphooxymethyl)pyrimidine is bound at residue Ser-112. 139–141 (TIS) contributes to the 2-[(2R,5Z)-2-carboxy-4-methylthiazol-5(2H)-ylidene]ethyl phosphate binding site. Residue Lys-142 participates in 4-amino-2-methyl-5-(diphosphooxymethyl)pyrimidine binding. 2-[(2R,5Z)-2-carboxy-4-methylthiazol-5(2H)-ylidene]ethyl phosphate-binding positions include Gly-171 and 191–192 (IS).

The protein belongs to the thiamine-phosphate synthase family. Requires Mg(2+) as cofactor.

The catalysed reaction is 2-[(2R,5Z)-2-carboxy-4-methylthiazol-5(2H)-ylidene]ethyl phosphate + 4-amino-2-methyl-5-(diphosphooxymethyl)pyrimidine + 2 H(+) = thiamine phosphate + CO2 + diphosphate. It catalyses the reaction 2-(2-carboxy-4-methylthiazol-5-yl)ethyl phosphate + 4-amino-2-methyl-5-(diphosphooxymethyl)pyrimidine + 2 H(+) = thiamine phosphate + CO2 + diphosphate. It carries out the reaction 4-methyl-5-(2-phosphooxyethyl)-thiazole + 4-amino-2-methyl-5-(diphosphooxymethyl)pyrimidine + H(+) = thiamine phosphate + diphosphate. Its pathway is cofactor biosynthesis; thiamine diphosphate biosynthesis; thiamine phosphate from 4-amino-2-methyl-5-diphosphomethylpyrimidine and 4-methyl-5-(2-phosphoethyl)-thiazole: step 1/1. In terms of biological role, condenses 4-methyl-5-(beta-hydroxyethyl)thiazole monophosphate (THZ-P) and 2-methyl-4-amino-5-hydroxymethyl pyrimidine pyrophosphate (HMP-PP) to form thiamine monophosphate (TMP). This is Thiamine-phosphate synthase from Listeria innocua serovar 6a (strain ATCC BAA-680 / CLIP 11262).